The following is a 770-amino-acid chain: DNA topoisomerase 1 (770 aa).

The Toprim domain occupies 4–140 (FRIIIAEKAD…EIRRAKFSAL (137 aa)). Mg(2+) is bound by residues E10 and D109. The region spanning 156–563 (NYSLADAADA…ESKKMLHEVL (408 aa)) is the Topo IA-type catalytic domain. Residues 194 to 199 (SAGRVQ) are interaction with DNA. The active-site O-(5'-phospho-DNA)-tyrosine intermediate is the Y312. 3 consecutive C4-type zinc fingers follow at residues 611–638 (CEDPSCKINFRIKRNGSITLSDQKCPVC), 673–700 (CPADHGRLVLRQSKYGKRFLGCSNYPKC), and 719–744 (CPYCGAPILALSRNGRKWKFCPNMQC).

The protein belongs to the type IA topoisomerase family. As to quaternary structure, monomer. Requires Mg(2+) as cofactor.

The catalysed reaction is ATP-independent breakage of single-stranded DNA, followed by passage and rejoining.. Releases the supercoiling and torsional tension of DNA, which is introduced during the DNA replication and transcription, by transiently cleaving and rejoining one strand of the DNA duplex. Introduces a single-strand break via transesterification at a target site in duplex DNA. The scissile phosphodiester is attacked by the catalytic tyrosine of the enzyme, resulting in the formation of a DNA-(5'-phosphotyrosyl)-enzyme intermediate and the expulsion of a 3'-OH DNA strand. The free DNA strand then undergoes passage around the unbroken strand, thus removing DNA supercoils. Finally, in the religation step, the DNA 3'-OH attacks the covalent intermediate to expel the active-site tyrosine and restore the DNA phosphodiester backbone. The polypeptide is DNA topoisomerase 1 (Thermoplasma acidophilum (strain ATCC 25905 / DSM 1728 / JCM 9062 / NBRC 15155 / AMRC-C165)).